The primary structure comprises 195 residues: Triosephosphate isomerase, cytosolic (195 aa).

His-37 serves as the catalytic Electrophile. Glu-107 acts as the Proton acceptor in catalysis.

It belongs to the triosephosphate isomerase family. Homodimer.

It localises to the cytoplasm. It carries out the reaction D-glyceraldehyde 3-phosphate = dihydroxyacetone phosphate. It participates in carbohydrate biosynthesis; gluconeogenesis. It functions in the pathway carbohydrate degradation; glycolysis; D-glyceraldehyde 3-phosphate from glycerone phosphate: step 1/1. In Lactuca sativa (Garden lettuce), this protein is Triosephosphate isomerase, cytosolic.